A 122-amino-acid chain; its full sequence is Large ribosomal subunit protein uL14 (122 aa).

It belongs to the universal ribosomal protein uL14 family. Part of the 50S ribosomal subunit. Forms a cluster with proteins L3 and L19. In the 70S ribosome, L14 and L19 interact and together make contacts with the 16S rRNA in bridges B5 and B8.

Functionally, binds to 23S rRNA. Forms part of two intersubunit bridges in the 70S ribosome. The sequence is that of Large ribosomal subunit protein uL14 from Rhizobium johnstonii (strain DSM 114642 / LMG 32736 / 3841) (Rhizobium leguminosarum bv. viciae).